The chain runs to 760 residues: MTNIFNAMRVTATVGGKEIVFETGRLANQADGAVWIQCGGTVVLVTACSQATDRDLGFFPLTVEYSEKMYAAGRIPGSFFRREIGRPSERETLVSRLIDRPIRPLFPKGLKDEVQVLANVISSDQNNDSDVLAVTGASTALGLSSIPFDGPVAGARIGRIDGQFVINPTIKEMERSDLNIVLAASRDAVVMVEGEASFVPEAVIVEALEWGHKEIQPLIDAQLKLREMAGKAKREFTAPVEDADLAARVAALATADLDVALRIPEKMARKDARKAVKEKVMEALVADPAYAEDTTPLRAVGDILSALEKRIVRERIVREGRRIDGRDTTTVRPILIEAGILPRAHGSALFARGETKSLVVATLGSSTDEQRMDSLTGDVTKRFMLHYNFAPYCVGEVKPVRVSRREIGHGALAEKALRPILPLGEDFPFTLRVVAETMESNGSSSMAAVCGGCLSLMDAGVPITAPVAGVAMGLIKEGDQYVVLTDILGDEDALGDMDFKIAGTSEGITAVQMDIKVKGLPTDVMARAMQQARDARLHILGEMGKVLEAPRAELSAYAPQHAEVFVNPDIIRIIIGPGGKNIKAITATTGASIDIEDSGRVSIFAPTLEAMEMAREMVQYYDQRADIGKNYTGKVRKVLEIGAIVEILPNLEALVHISQLDTNRVEQASDVARLGEDMVVKVIEINGDRIRASRKAVLLEEQGIEWKPEDTARPSGPREGGRRDGGRDGRRDGGRDGRRDGGRDGGRRDGGRRDGGRDRN.

Mg(2+)-binding residues include Asp492 and Asp498. The KH domain occupies 559 to 618 (PQHAEVFVNPDIIRIIIGPGGKNIKAITATTGASIDIEDSGRVSIFAPTLEAMEMAREMV). The S1 motif domain maps to 628 to 702 (GKNYTGKVRK…SRKAVLLEEQ (75 aa)). The interval 706–760 (WKPEDTARPSGPREGGRRDGGRDGRRDGGRDGRRDGGRDGGRRDGGRRDGGRDRN) is disordered. Over residues 719-760 (EGGRRDGGRDGRRDGGRDGRRDGGRDGGRRDGGRRDGGRDRN) the composition is skewed to basic and acidic residues.

This sequence belongs to the polyribonucleotide nucleotidyltransferase family. It depends on Mg(2+) as a cofactor.

The protein localises to the cytoplasm. It carries out the reaction RNA(n+1) + phosphate = RNA(n) + a ribonucleoside 5'-diphosphate. Its function is as follows. Involved in mRNA degradation. Catalyzes the phosphorolysis of single-stranded polyribonucleotides processively in the 3'- to 5'-direction. This is Polyribonucleotide nucleotidyltransferase from Nitratidesulfovibrio vulgaris (strain ATCC 29579 / DSM 644 / CCUG 34227 / NCIMB 8303 / VKM B-1760 / Hildenborough) (Desulfovibrio vulgaris).